We begin with the raw amino-acid sequence, 475 residues long: ATP synthase subunit beta (475 aa).

Residue 153–160 (GGAGVGKT) coordinates ATP.

Belongs to the ATPase alpha/beta chains family. F-type ATPases have 2 components, CF(1) - the catalytic core - and CF(0) - the membrane proton channel. CF(1) has five subunits: alpha(3), beta(3), gamma(1), delta(1), epsilon(1). CF(0) has three main subunits: a(1), b(2) and c(9-12). The alpha and beta chains form an alternating ring which encloses part of the gamma chain. CF(1) is attached to CF(0) by a central stalk formed by the gamma and epsilon chains, while a peripheral stalk is formed by the delta and b chains.

It is found in the cell membrane. The enzyme catalyses ATP + H2O + 4 H(+)(in) = ADP + phosphate + 5 H(+)(out). In terms of biological role, produces ATP from ADP in the presence of a proton gradient across the membrane. The catalytic sites are hosted primarily by the beta subunits. This is ATP synthase subunit beta from Limosilactobacillus reuteri (strain DSM 20016) (Lactobacillus reuteri).